Reading from the N-terminus, the 468-residue chain is Bifunctional protein GlmU (468 aa).

The pyrophosphorylase stretch occupies residues 1–233 (MAQAGSASPL…LEEANLVNDR (233 aa)). Residues 15–18 (LAAG), Lys-29, Gln-79, and 84–85 (GT) contribute to the UDP-N-acetyl-alpha-D-glucosamine site. Position 109 (Asp-109) interacts with Mg(2+). UDP-N-acetyl-alpha-D-glucosamine contacts are provided by Gly-146, Glu-159, Asn-174, and Asn-231. Position 231 (Asn-231) interacts with Mg(2+). The tract at residues 234–254 (SQLARAEEILRRRILDAHMKE) is linker. The interval 255–468 (GVTVRDPVST…GDRRRARTEG (214 aa)) is N-acetyltransferase. UDP-N-acetyl-alpha-D-glucosamine is bound by residues Arg-336 and Lys-354. The active-site Proton acceptor is the His-366. Residues Tyr-369 and Asn-380 each coordinate UDP-N-acetyl-alpha-D-glucosamine. Residues Ala-383, 389–390 (NY), and Ala-426 contribute to the acetyl-CoA site.

This sequence in the N-terminal section; belongs to the N-acetylglucosamine-1-phosphate uridyltransferase family. The protein in the C-terminal section; belongs to the transferase hexapeptide repeat family. In terms of assembly, homotrimer. Mg(2+) serves as cofactor.

The protein localises to the cytoplasm. It carries out the reaction alpha-D-glucosamine 1-phosphate + acetyl-CoA = N-acetyl-alpha-D-glucosamine 1-phosphate + CoA + H(+). The catalysed reaction is N-acetyl-alpha-D-glucosamine 1-phosphate + UTP + H(+) = UDP-N-acetyl-alpha-D-glucosamine + diphosphate. Its pathway is nucleotide-sugar biosynthesis; UDP-N-acetyl-alpha-D-glucosamine biosynthesis; N-acetyl-alpha-D-glucosamine 1-phosphate from alpha-D-glucosamine 6-phosphate (route II): step 2/2. The protein operates within nucleotide-sugar biosynthesis; UDP-N-acetyl-alpha-D-glucosamine biosynthesis; UDP-N-acetyl-alpha-D-glucosamine from N-acetyl-alpha-D-glucosamine 1-phosphate: step 1/1. It participates in bacterial outer membrane biogenesis; LPS lipid A biosynthesis. Catalyzes the last two sequential reactions in the de novo biosynthetic pathway for UDP-N-acetylglucosamine (UDP-GlcNAc). The C-terminal domain catalyzes the transfer of acetyl group from acetyl coenzyme A to glucosamine-1-phosphate (GlcN-1-P) to produce N-acetylglucosamine-1-phosphate (GlcNAc-1-P), which is converted into UDP-GlcNAc by the transfer of uridine 5-monophosphate (from uridine 5-triphosphate), a reaction catalyzed by the N-terminal domain. The sequence is that of Bifunctional protein GlmU from Rubrobacter xylanophilus (strain DSM 9941 / JCM 11954 / NBRC 16129 / PRD-1).